A 697-amino-acid polypeptide reads, in one-letter code: Testis-specific gene 10 protein (697 aa).

Residues 556-688 form an interaction with HIF1A region; sequence QMTNERISMQ…SPDRGLDRSL (133 aa). The interval 656 to 684 is disordered; it reads NAYNLGPMKPNTKCHSPERAHHRSPDRGL. Basic and acidic residues predominate over residues 670–684; the sequence is HSPERAHHRSPDRGL. At Ser687 the chain carries Phosphoserine.

It belongs to the CEP135/TSGA10 family. In terms of assembly, interacts with HIF1A. In terms of processing, processed into N-terminal 27-kDa and C-terminal 55-kDa fragments. In terms of tissue distribution, predominantly expressed in testis, in spermatozoa (at protein level). Not detected in Leydig cells. The N-terminal 27-kDa fragment is also detected in liver, while the C-terminal 55-kDa fragment is also found retina, brain and kidney (at protein level).

It is found in the cytoplasm. It localises to the cytoskeleton. The protein localises to the microtubule organizing center. Its subcellular location is the centrosome. The protein resides in the centriole. In terms of biological role, plays a role in spermatogenesis. When overexpressed, prevents nuclear localization of HIF1A. The chain is Testis-specific gene 10 protein (Tsga10) from Mus musculus (Mouse).